The chain runs to 609 residues: UvrABC system protein C (609 aa).

Positions 13 to 91 constitute a GIY-YIG domain; it reads HEPGVYRMYD…IKLYQPRYNV (79 aa). Residues 201–236 form the UVR domain; that stretch reads QQVLDYLIGKMEQASRNLDFEQAARYRDQIQAVRSV.

The protein belongs to the UvrC family. Interacts with UvrB in an incision complex.

Its subcellular location is the cytoplasm. Its function is as follows. The UvrABC repair system catalyzes the recognition and processing of DNA lesions. UvrC both incises the 5' and 3' sides of the lesion. The N-terminal half is responsible for the 3' incision and the C-terminal half is responsible for the 5' incision. The sequence is that of UvrABC system protein C from Haemophilus influenzae (strain ATCC 51907 / DSM 11121 / KW20 / Rd).